We begin with the raw amino-acid sequence, 371 residues long: Histidinol-phosphate aminotransferase (371 aa).

At Lys232 the chain carries N6-(pyridoxal phosphate)lysine.

The protein belongs to the class-II pyridoxal-phosphate-dependent aminotransferase family. Histidinol-phosphate aminotransferase subfamily. Homodimer. It depends on pyridoxal 5'-phosphate as a cofactor.

It carries out the reaction L-histidinol phosphate + 2-oxoglutarate = 3-(imidazol-4-yl)-2-oxopropyl phosphate + L-glutamate. The protein operates within amino-acid biosynthesis; L-histidine biosynthesis; L-histidine from 5-phospho-alpha-D-ribose 1-diphosphate: step 7/9. This is Histidinol-phosphate aminotransferase from Methylibium petroleiphilum (strain ATCC BAA-1232 / LMG 22953 / PM1).